Reading from the N-terminus, the 251-residue chain is RING-H2 finger protein ATL10 (251 aa).

The chain crosses the membrane as a helical span at residues 59–79 (MMLLSILICGIICCLGLHYII). Residues 135–177 (CVICLSDFVSGEQLRLLPKCNHGFHVRCIDKWLQQHLTCPKCR) form an RING-type; atypical zinc finger.

It belongs to the RING-type zinc finger family. ATL subfamily.

The protein resides in the membrane. The catalysed reaction is S-ubiquitinyl-[E2 ubiquitin-conjugating enzyme]-L-cysteine + [acceptor protein]-L-lysine = [E2 ubiquitin-conjugating enzyme]-L-cysteine + N(6)-ubiquitinyl-[acceptor protein]-L-lysine.. Its pathway is protein modification; protein ubiquitination. The sequence is that of RING-H2 finger protein ATL10 (ATL10) from Arabidopsis thaliana (Mouse-ear cress).